Here is a 208-residue protein sequence, read N- to C-terminus: Protein GrpE (208 aa).

A compositionally biased stretch (basic and acidic residues) spans 1-27; that stretch reads MERMNQSRKVPIHDAAEESSAEAHETQ. Residues 1 to 65 are disordered; the sequence is MERMNQSRKV…AEEAQEEEAA (65 aa). Positions 45-64 are enriched in acidic residues; the sequence is MAEEAVEQAQDAEEAQEEEA.

It belongs to the GrpE family. Homodimer.

The protein localises to the cytoplasm. Its function is as follows. Participates actively in the response to hyperosmotic and heat shock by preventing the aggregation of stress-denatured proteins, in association with DnaK and GrpE. It is the nucleotide exchange factor for DnaK and may function as a thermosensor. Unfolded proteins bind initially to DnaJ; upon interaction with the DnaJ-bound protein, DnaK hydrolyzes its bound ATP, resulting in the formation of a stable complex. GrpE releases ADP from DnaK; ATP binding to DnaK triggers the release of the substrate protein, thus completing the reaction cycle. Several rounds of ATP-dependent interactions between DnaJ, DnaK and GrpE are required for fully efficient folding. The chain is Protein GrpE from Desulfatibacillum aliphaticivorans.